The following is a 465-amino-acid chain: A-type ATP synthase subunit B (465 aa).

It belongs to the ATPase alpha/beta chains family. As to quaternary structure, the A-type ATPase is composed of subunits A(3), B(3), C, D, E(1 or 2), F, H(2), I and proteolipid K(x).

The protein resides in the cell membrane. Component of the A-type ATP synthase that produces ATP from ADP in the presence of a proton gradient across the membrane. The B chain is a regulatory subunit. In Methanocaldococcus jannaschii (strain ATCC 43067 / DSM 2661 / JAL-1 / JCM 10045 / NBRC 100440) (Methanococcus jannaschii), this protein is A-type ATP synthase subunit B.